A 298-amino-acid chain; its full sequence is Protoheme IX farnesyltransferase (298 aa).

The next 9 membrane-spanning stretches (helical) occupy residues 26-46, 52-72, 93-113, 120-140, 148-168, 174-194, 219-239, 241-261, and 278-298; these read VVSL…PGAV, LLGT…NCLV, VSVP…LFIL, LTMW…TVIL, IVIG…AITG, ALLL…ALAL, LHVL…YLTQ, SGLI…YYAI, and YSII…YFYF.

The protein belongs to the UbiA prenyltransferase family. Protoheme IX farnesyltransferase subfamily.

It localises to the cell inner membrane. The enzyme catalyses heme b + (2E,6E)-farnesyl diphosphate + H2O = Fe(II)-heme o + diphosphate. It functions in the pathway porphyrin-containing compound metabolism; heme O biosynthesis; heme O from protoheme: step 1/1. Its function is as follows. Converts heme B (protoheme IX) to heme O by substitution of the vinyl group on carbon 2 of heme B porphyrin ring with a hydroxyethyl farnesyl side group. The polypeptide is Protoheme IX farnesyltransferase (Nitrosomonas eutropha (strain DSM 101675 / C91 / Nm57)).